A 271-amino-acid polypeptide reads, in one-letter code: Inactive phospholipid phosphatase 7 (271 aa).

Residues 1 to 66 (MPASQSRARA…RERRQSQQLP (66 aa)) are disordered. Residues 1–112 (MPASQSRARA…AASWASARSM (112 aa)) are Cytoplasmic-facing. Phosphoserine occurs at positions 43 and 62. The segment at 70–91 (CMQLNPSFKGIAFNSLLAIDIC) is interaction with MTOR. Residues 113–133 (VKLIGITGHGIPWIGGTILCL) traverse the membrane as a helical segment. Over 134-141 (VKSSTLAG) the chain is Extracellular. A helical transmembrane segment spans residues 142-162 (QEVLMNLLLALLLDIMTVAGV). Residues 163–202 (QKLIKRRGPYETSPSLLDYLTMDIYAFPAGHASRAAMVSK) lie on the Cytoplasmic side of the membrane. A helical membrane pass occupies residues 203 to 223 (FFLSHLVLAVPLRVLLVLWAL). The Extracellular segment spans residues 224–239 (CVGLSRVMIGRHHVTD). A helical transmembrane segment spans residues 240 to 260 (VLSGFVIGYLQFRLVELVWMP). At 261 to 271 (SSTCQMLISAW) the chain is on the cytoplasmic side.

It belongs to the PA-phosphatase related phosphoesterase family. In terms of assembly, homo and heterooligomer. Interacts with MTOR; controls MTOR-dependent IGF2 expression during myoblast differentiation.

The protein localises to the nucleus envelope. Its subcellular location is the endoplasmic reticulum membrane. It is found in the membrane. In terms of biological role, plays a role as negative regulator of myoblast differentiation, in part through effects on MTOR signaling. Has no detectable enzymatic activity. This Homo sapiens (Human) protein is Inactive phospholipid phosphatase 7.